Here is a 529-residue protein sequence, read N- to C-terminus: Protein PNS1 (529 aa).

Positions 1-58 (MSQQYSYGGGGGAGYPPPQMQPPNSYAQANYQGQPQGAQNQYYNGQQPHHNAPQQYYG) are disordered. Residues 1 to 84 (MSQQYSYGGG…LQPKPKFRDP (84 aa)) are Cytoplasmic-facing. A compositionally biased stretch (low complexity) spans 22 to 48 (PPNSYAQANYQGQPQGAQNQYYNGQQP). The helical transmembrane segment at 85-105 (IFLVLFLLVFAGFIALSVICL) threads the bilayer. Topologically, residues 106 to 132 (RSYSNADVNVSIGRANVAGSTLNGHTA) are extracellular. Asn-114 carries N-linked (GlcNAc...) asparagine glycosylation. Residues 133–153 (IMFMICCAVALVLSFVYILLV) form a helical membrane-spanning segment. Residues 154–158 (RTFPK) are Cytoplasmic-facing. The chain crosses the membrane as a helical span at residues 159–179 (IILEATLLLTTLSNVAFCVYL). The Extracellular segment spans residues 180–184 (WVRGN). The chain crosses the membrane as a helical span at residues 185–205 (TAAAIIFTIFAVLSVIAYFFM). The Cytoplasmic portion of the chain corresponds to 206–230 (RKRIPLAKLILVTVIRTAEQYKSVY). A helical transmembrane segment spans residues 231–251 (VVALGGLIVETAFSAWTSWVV). Topologically, residues 252–271 (VAAYQRFEPSGQAAGSSSSN) are extracellular. N-linked (GlcNAc...) asparagine glycosylation occurs at Asn-271. The helical transmembrane segment at 272-292 (ASIIGIMVFIVFAYYWISEVI) threads the bilayer. Residues 293–294 (KN) are Cytoplasmic-facing. A helical transmembrane segment spans residues 295–315 (IAFTTVAGIFGVAYYNANKVA). Residues 316–325 (NAAWGAFRRS) are Extracellular-facing. A helical transmembrane segment spans residues 326 to 346 (MTYSLGSICFGSLIVAILDLL). Topologically, residues 347 to 362 (RALFNILQSQAASDGD) are cytoplasmic. A helical transmembrane segment spans residues 363-383 (MTGQILACVAGCCVSCIQGLV). At 384–427 (DYFNRYAYINIALYGNGYITAAKETWALLKDRGIDAIINDSLVN) the chain is on the extracellular side. Asn-422 carries N-linked (GlcNAc...) asparagine glycosylation. A helical transmembrane segment spans residues 428-448 (IVFNCGAFIIGLLTALFAFIY). The Cytoplasmic portion of the chain corresponds to 449-464 (EQLTNPRYLQNDAGYY). A helical membrane pass occupies residues 465–485 (SIVLLVAFGLGFNIALSVGAG). Topologically, residues 486 to 529 (SIASGVSTYFVALAEDPYILQGKNPELFEMIRQQYPQVVQGVNH) are extracellular.

It belongs to the CTL (choline transporter-like) family.

Its subcellular location is the cell membrane. Probably involved in transport through the plasma membrane. This is Protein PNS1 (PNS1) from Mycosarcoma maydis (Corn smut fungus).